The primary structure comprises 540 residues: Sterol O-acyltransferase 1 (540 aa).

The interval 1–20 is disordered; it reads MSLRNRLSKSGENPEQDEAQ. Topologically, residues 1–128 are cytoplasmic; sequence MSLRNRLSKS…LDELFEVDHI (128 aa). Position 2 is a phosphoserine (serine 2). Residue histidine 127 coordinates cholesterol. Residues 129–150 traverse the membrane as a helical segment; sequence RTIYHMFIALLILFVLSTIVVD. Topologically, residues 151-170 are lumenal; that stretch reads YIDEGRLVLEFNLLAYAFGK. A helical membrane pass occupies residues 171 to 196; the sequence is FPTVIWTWWAMFLSTLSIPYFLFQRW. The Cytoplasmic portion of the chain corresponds to 197–208; that stretch reads AHGYSKSSHPLI. A helical membrane pass occupies residues 209–234; the sequence is YSLVHGLLFLVFQLGVLGFVPTYVVL. At 235 to 242 the chain is on the lumenal side; it reads AYTLPPAS. The helical transmembrane segment at 243 to 266 threads the bilayer; the sequence is RFILILEQIRLIMKAHSFVRENIP. Residues 267–309 lie on the Cytoplasmic side of the membrane; sequence RVLNAAKEKSSKDPLPTVNQYLYFLFAPTLIYRDNYPRTPTVR. A helical membrane pass occupies residues 310–342; the sequence is WGYVAMQFLQVFGCLFYVYYIFERLCAPLFRNI. Residues 343 to 359 are Lumenal-facing; that stretch reads KQEPFSARVLVLCVFNS. The chain crosses the membrane as a helical span at residues 360–385; the sequence is ILPGVLILFLSFFAFLHCWLNAFAEM. Residues 386-433 are Cytoplasmic-facing; the sequence is LRFGDRMFYKDWWNSTSYSNYYRTWNVVVHDWLYYYVYKDLLWFFSKR. An FYXDWWN motif motif is present at residues 393–399; the sequence is FYKDWWN. 7 residues coordinate an acyl-CoA: asparagine 405, arginine 408, asparagine 411, histidine 415, tyrosine 423, lysine 435, and serine 446. Residues 434-458 traverse the membrane as a helical segment; sequence FKSAAMLAVFALSAVVHEYALAICL. The active site involves histidine 450. Topologically, residues 459-464 are lumenal; that stretch reads SYFYPV. The helical transmembrane segment at 465-480 threads the bilayer; sequence LFVLFMFFGMAFNFIV. Over 481-486 the chain is Cytoplasmic; that stretch reads NDSRKR. A helical transmembrane segment spans residues 487–518; sequence PIWNIMVWASLFLGYGLILCFYSQEWYARQHC. Cysteine 518 and cysteine 536 are disulfide-bonded. At 519–540 the chain is on the lumenal side; that stretch reads PLKNPTFLDYVRPRTWTCRYVF.

Belongs to the membrane-bound acyltransferase family. Sterol o-acyltransferase subfamily. May form homo- or heterodimers. Interacts with UBIAD1.

The protein resides in the endoplasmic reticulum membrane. The catalysed reaction is a sterol + a long-chain fatty acyl-CoA = a long-chain 3-hydroxysterol ester + CoA. It carries out the reaction cholesterol + an acyl-CoA = a cholesterol ester + CoA. The enzyme catalyses cholesterol + (9Z)-octadecenoyl-CoA = cholesteryl (9Z-octadecenoate) + CoA. It catalyses the reaction cholesterol + hexadecanoyl-CoA = cholesteryl hexadecanoate + CoA. The catalysed reaction is octadecanoyl-CoA + cholesterol = cholesteryl octadecanoate + CoA. It carries out the reaction (9Z,12Z)-octadecadienoyl-CoA + cholesterol = cholesteryl (9Z,12Z)-octadecadienoate + CoA. The enzyme catalyses (5Z,8Z,11Z,14Z)-eicosatetraenoyl-CoA + cholesterol = cholesteryl (5Z,8Z,11Z,14Z)-eicosatetraenoate + CoA. It catalyses the reaction (9Z)-hexadecenoyl-CoA + cholesterol = cholesteryl (9Z)-hexadecenoate + CoA. The catalysed reaction is (11Z)-octadecenoyl-CoA + cholesterol = cholesteryl (11Z)-octadecenoate + CoA. It carries out the reaction (7Z)-octadecenoyl-CoA + cholesterol = cholesteryl (7Z)-octadecenoate + CoA. In terms of biological role, catalyzes the formation of fatty acid-cholesterol esters, which are less soluble in membranes than cholesterol. Plays a role in lipoprotein assembly and dietary cholesterol absorption. Preferentially utilizes oleoyl-CoA ((9Z)-octadecenoyl-CoA) as a substrate: shows a higher activity towards an acyl-CoA substrate with a double bond at the delta-9 position (9Z) than towards saturated acyl-CoA or an unsaturated acyl-CoA with a double bond at the delta-7 (7Z) or delta-11 (11Z) positions. The protein is Sterol O-acyltransferase 1 of Mus musculus (Mouse).